The following is a 445-amino-acid chain: Cholesterol side-chain cleavage enzyme, mitochondrial (445 aa).

The N-terminal 36 residues, 1–36 (RGLPSRSVFLRGCQASLSTAQERLGHPGVPTREGVR), are a transit peptide targeting the mitochondrion.

Belongs to the cytochrome P450 family. In terms of assembly, interacts with FDX1/adrenodoxin. Requires heme as cofactor.

The protein resides in the mitochondrion inner membrane. The enzyme catalyses 6 reduced [adrenodoxin] + cholesterol + 3 O2 + 6 H(+) = 4-methylpentanal + pregnenolone + 6 oxidized [adrenodoxin] + 4 H2O. It carries out the reaction 2 reduced [adrenodoxin] + cholesterol + O2 + 2 H(+) = (22R)-hydroxycholesterol + 2 oxidized [adrenodoxin] + H2O. The catalysed reaction is (22R)-hydroxycholesterol + 2 reduced [adrenodoxin] + O2 + 2 H(+) = (20R,22R)-20,22-dihydroxycholesterol + 2 oxidized [adrenodoxin] + H2O. It catalyses the reaction (20R,22R)-20,22-dihydroxycholesterol + 2 reduced [adrenodoxin] + O2 + 2 H(+) = 4-methylpentanal + pregnenolone + 2 oxidized [adrenodoxin] + 2 H2O. Its pathway is lipid metabolism; C21-steroid hormone metabolism. It participates in steroid metabolism; cholesterol metabolism. Functionally, a cytochrome P450 monooxygenase that catalyzes the side-chain hydroxylation and cleavage of cholesterol to pregnenolone, the precursor of most steroid hormones. Catalyzes three sequential oxidation reactions of cholesterol, namely the hydroxylation at C22 followed with the hydroxylation at C20 to yield 20R,22R-hydroxycholesterol that is further cleaved between C20 and C22 to yield the C21-steroid pregnenolone and 4-methylpentanal. Mechanistically, uses molecular oxygen inserting one oxygen atom into a substrate and reducing the second into a water molecule. Two electrons are provided by NADPH via a two-protein mitochondrial transfer system comprising flavoprotein FDXR (adrenodoxin/ferredoxin reductase) and nonheme iron-sulfur protein FDX1 or FDX2 (adrenodoxin/ferredoxin). The chain is Cholesterol side-chain cleavage enzyme, mitochondrial (CYP11A1) from Oryctolagus cuniculus (Rabbit).